A 133-amino-acid chain; its full sequence is P2Y purinoceptor 2 (133 aa).

Residues isoleucine 1–arginine 26 lie on the Cytoplasmic side of the membrane. The helical transmembrane segment at valine 27–threonine 47 threads the bilayer. Topologically, residues threonine 48–serine 74 are extracellular. A helical transmembrane segment spans residues valine 75–methionine 95. At alanine 96–lysine 116 the chain is on the cytoplasmic side. The chain crosses the membrane as a helical span at residues serine 117–leucine 133.

Belongs to the G-protein coupled receptor 1 family.

It localises to the cell membrane. Its function is as follows. Receptor for ATP and UTP coupled to G-proteins that activate a phosphatidylinositol-calcium second messenger system. The chain is P2Y purinoceptor 2 (P2RY2) from Bos taurus (Bovine).